The chain runs to 165 residues: Nucleotide-binding protein Cagg_1607 (165 aa).

This sequence belongs to the YajQ family.

Its function is as follows. Nucleotide-binding protein. The protein is Nucleotide-binding protein Cagg_1607 of Chloroflexus aggregans (strain MD-66 / DSM 9485).